The chain runs to 501 residues: MSRYVGAIDQGTTSSRFIVFDREGSVIALAQAEHAQIYPAPGHVEHDATEIWTKTQSVMREALEKGGLQPSDLAAVGITNQRETTLIWDRKTGKPLHNALVWQDTRNDRLVAEFARDGGRDRFRDLTGLPLASYFSGLKLRWLLDHVAGARAKAEAGDVLFGNIDTWLVWNLTGGTEGGLHVTDVTNASRTQLMSLKTLEWDEGMLRTFGIPKAMLPKIVSSSEVYGETRAPFAGVPIAGILGDQQAALFGQTCFAPGEAKNTYGTGCFALMNTGEEPVPSKAGLVTTLAYRLDGQKPAYALEGSIAITGALVQWLRDNLHMIKDSAEVETLATTVEDNGGVYFVPAFSGLYAPHWNEGARGLIIGLTRYVNRGHIARSVLEATAFQTHEVLDAMAKDSGIPVKELRADGGMVANNTLMQFQADMLDVPVVRPKVAETTALGAAYAAGLAVGYWKGLDDLKRNWGVDKRWTPKMDAGRRETIAAAWSRAVQRSFDWKTDED.

Thr-12 is an ADP binding site. ATP is bound by residues Thr-12, Thr-13, and Ser-14. A sn-glycerol 3-phosphate-binding site is contributed by Thr-12. Residue Arg-16 participates in ADP binding. Residues Arg-82, Glu-83, Tyr-134, and Asp-244 each coordinate sn-glycerol 3-phosphate. The glycerol site is built by Arg-82, Glu-83, Tyr-134, Asp-244, and Gln-245. ADP is bound by residues Thr-266 and Gly-310. The ATP site is built by Thr-266, Gly-310, Gln-314, and Gly-411. ADP-binding residues include Gly-411 and Asn-415.

The protein belongs to the FGGY kinase family.

The catalysed reaction is glycerol + ATP = sn-glycerol 3-phosphate + ADP + H(+). The protein operates within polyol metabolism; glycerol degradation via glycerol kinase pathway; sn-glycerol 3-phosphate from glycerol: step 1/1. Its activity is regulated as follows. Inhibited by fructose 1,6-bisphosphate (FBP). In terms of biological role, key enzyme in the regulation of glycerol uptake and metabolism. Catalyzes the phosphorylation of glycerol to yield sn-glycerol 3-phosphate. In Methylobacterium radiotolerans (strain ATCC 27329 / DSM 1819 / JCM 2831 / NBRC 15690 / NCIMB 10815 / 0-1), this protein is Glycerol kinase.